A 264-amino-acid polypeptide reads, in one-letter code: Thiazole synthase (264 aa).

Residue K106 is the Schiff-base intermediate with DXP of the active site. Residues G167, 193–194 (AG), and 215–216 (NS) each bind 1-deoxy-D-xylulose 5-phosphate.

The protein belongs to the ThiG family. Homotetramer. Forms heterodimers with either ThiH or ThiS.

The protein resides in the cytoplasm. The catalysed reaction is [ThiS sulfur-carrier protein]-C-terminal-Gly-aminoethanethioate + 2-iminoacetate + 1-deoxy-D-xylulose 5-phosphate = [ThiS sulfur-carrier protein]-C-terminal Gly-Gly + 2-[(2R,5Z)-2-carboxy-4-methylthiazol-5(2H)-ylidene]ethyl phosphate + 2 H2O + H(+). Its pathway is cofactor biosynthesis; thiamine diphosphate biosynthesis. Its function is as follows. Catalyzes the rearrangement of 1-deoxy-D-xylulose 5-phosphate (DXP) to produce the thiazole phosphate moiety of thiamine. Sulfur is provided by the thiocarboxylate moiety of the carrier protein ThiS. In vitro, sulfur can be provided by H(2)S. In Pseudomonas fluorescens (strain SBW25), this protein is Thiazole synthase.